Here is a 903-residue protein sequence, read N- to C-terminus: Protein translocase subunit SecA (903 aa).

Residues Gln-85, 103–107 (GEGKT), and Asp-492 contribute to the ATP site. The disordered stretch occupies residues 863 to 890 (GDGVKQPVRRDKKVGRNSPCPCGSGKKY). Zn(2+) is bound by residues Cys-882, Cys-884, Cys-893, and Cys-894.

The protein belongs to the SecA family. Monomer and homodimer. Part of the essential Sec protein translocation apparatus which comprises SecA, SecYEG and auxiliary proteins SecDF. Other proteins may also be involved. The cofactor is Zn(2+).

It localises to the cell membrane. Its subcellular location is the cytoplasm. The enzyme catalyses ATP + H2O + cellular proteinSide 1 = ADP + phosphate + cellular proteinSide 2.. Functionally, part of the Sec protein translocase complex. Interacts with the SecYEG preprotein conducting channel. Has a central role in coupling the hydrolysis of ATP to the transfer of proteins into and across the cell membrane, serving as an ATP-driven molecular motor driving the stepwise translocation of polypeptide chains across the membrane. This Desulforudis audaxviator (strain MP104C) protein is Protein translocase subunit SecA.